A 283-amino-acid polypeptide reads, in one-letter code: Zinc import ATP-binding protein ZnuC (283 aa).

The ABC transporter domain occupies 13-228; the sequence is VEMRNAGVHR…PEYVRLFGAR (216 aa). 45-52 contributes to the ATP binding site; the sequence is GPNGSGKS. The tract at residues 264–283 is disordered; it reads HHHDHARDGGQGGGGHGHAG. The span at 272–283 shows a compositional bias: gly residues; the sequence is GGQGGGGHGHAG.

The protein belongs to the ABC transporter superfamily. Zinc importer (TC 3.A.1.15.5) family. As to quaternary structure, the complex is composed of two ATP-binding proteins (ZnuC), two transmembrane proteins (ZnuB) and a solute-binding protein (ZnuA).

The protein localises to the cell inner membrane. It carries out the reaction Zn(2+)(out) + ATP(in) + H2O(in) = Zn(2+)(in) + ADP(in) + phosphate(in) + H(+)(in). Part of the ABC transporter complex ZnuABC involved in zinc import. Responsible for energy coupling to the transport system. The chain is Zinc import ATP-binding protein ZnuC from Chelativorans sp. (strain BNC1).